The primary structure comprises 357 residues: MSPSPFAPTIETIDYPFPPKPIPLSDAEKADYKARIKQLLIEKDAVLVAHYYTDPEIQALAEETGGCVSDSLEMARFGRDHPAKTLIVAGVKFMGETAKILSPEKTILMPTLEATCSLDLGCPIDKFNAFCDAHPDHTVVVYANTSAAVKARADWVVTSSIALEIVEHLDSEGKKIIWGPDRHLGSYIAKQTGAEMLMWQGDCIVHDEFKANALRDLKRVYPDAAILVHPESPASVVAMADAVGSTSQLIKAAQTMANERFIVATDRGIFYKMQQAAPGKTLIEAPTGGNGATCKSCAHCPWMAMNGLKAIEASLSDSDKTTHEIFVDEDLRVKALIPLTRMLDFAKTLNMKVKGNA.

Positions 50 and 71 each coordinate iminosuccinate. A [4Fe-4S] cluster-binding site is contributed by cysteine 116. Iminosuccinate-binding positions include 142-144 (YAN) and serine 159. Cysteine 203 contacts [4Fe-4S] cluster. Residues 229–231 (HPE) and threonine 246 contribute to the iminosuccinate site. A [4Fe-4S] cluster-binding site is contributed by cysteine 300.

The protein belongs to the quinolinate synthase family. Type 1 subfamily. [4Fe-4S] cluster is required as a cofactor.

It is found in the cytoplasm. The enzyme catalyses iminosuccinate + dihydroxyacetone phosphate = quinolinate + phosphate + 2 H2O + H(+). It participates in cofactor biosynthesis; NAD(+) biosynthesis; quinolinate from iminoaspartate: step 1/1. Catalyzes the condensation of iminoaspartate with dihydroxyacetone phosphate to form quinolinate. The chain is Quinolinate synthase from Shewanella sp. (strain ANA-3).